A 287-amino-acid chain; its full sequence is X-box-binding protein 1 (287 aa).

The bZIP domain occupies 61–117 (EEKMDRRKLKNRVAAQNARDKKKERSAKIEDVMRDLVEENRRLRAENERLRRQNKNL). The interval 63–87 (KMDRRKLKNRVAAQNARDKKKERSA) is disordered. Residues 63–88 (KMDRRKLKNRVAAQNARDKKKERSAK) form a basic motif region. Over residues 78–87 (ARDKKKERSA) the composition is skewed to basic and acidic residues. The tract at residues 89–117 (IEDVMRDLVEENRRLRAENERLRRQNKNL) is leucine-zipper.

As to quaternary structure, interacts with SUMO-conjugating enzyme ubc-9; the interaction is direct. Post-translationally, sumoylated. Sumoylation may negatively modulate the transcription of genes involved in the ER-stress-response.

The protein resides in the nucleus. Its function is as follows. Required for transcriptional regulation of the unfolded protein response (UPR) in the endoplasmic reticulum (ER) under stressed conditions, acting downstream of ire-1, and also maintaining ER homeostasis via a negative feedback loop, in parallel with ER kinase pek-1. May also regulate Golgi protein trafficking distal to the ER. Protects the host organism from the detrimental effects of mounting an innate immune response to microbes, such as the Gram-negative bacterium P.aeruginosa, probably by modulating the UPR. Plays a role in the unconventional cytoplasmic splicing processing of its own mRNA triggered by the endoplasmic reticulum (ER) transmembrane endoribonuclease ire-1: upon ER stress, the emerging xbp-1 polypeptide chain, as part of a mRNA-ribosome-nascent chain (R-RNC) complex, cotranslationally recruits its own unprocessed mRNA through transient docking to the ER membrane and translational pausing, therefore facilitating efficient ire-1-mediated xbp-1 mRNA isoform 2 production. In terms of biological role, functions as a stress-inducible potent transcriptional activator during endoplasmic reticulum (ER) stress by inducing unfolded protein response (UPR) target genes via binding to the UPR element (UPRE). Plays a role in modulation of the UPR, lipid metabolism, proteostasis, and lifespan. In neurons, rescues stress resistance, increases longevity, and, drives expression of lysosomal genes in the intestine and activates the UPR in distal, non-neuronal cell types through a cell-nonautonomous mechanism. In neurons or intestine, plays a role in protection against proteotoxicity, acting via positive modulation of genes involved in lysosomal function, including lipases and the fatty-acid desaturase fat-6. Protection against proteotoxicity in neurons is dependent upon the transcription factor atf-6. This chain is X-box-binding protein 1, found in Caenorhabditis elegans.